We begin with the raw amino-acid sequence, 383 residues long: Retrovirus-related Pol polyprotein from type-1 retrotransposable element R1 3 (383 aa).

Residues 1–88 enclose the Reverse transcriptase domain; that stretch reads VDAFADDLLL…DRVRYLGVNV (88 aa). The tract at residues 229–383 is nucleic acid-binding endonuclease; sequence LSLHECRELV…VQRMRENEES (155 aa).

The enzyme catalyses DNA(n) + a 2'-deoxyribonucleoside 5'-triphosphate = DNA(n+1) + diphosphate. This chain is Retrovirus-related Pol polyprotein from type-1 retrotransposable element R1 3, found in Nasonia vitripennis (Parasitic wasp).